Reading from the N-terminus, the 363-residue chain is 3-isopropylmalate dehydrogenase (363 aa).

78 to 91 (GPKWENLPPESQPE) serves as a coordination point for NAD(+). Substrate-binding residues include R99, R109, R138, and D227. The Mg(2+) site is built by D227, D251, and D255. 285–297 (GSAPDIAGKNIAN) provides a ligand contact to NAD(+).

It belongs to the isocitrate and isopropylmalate dehydrogenases family. LeuB type 1 subfamily. Homodimer. It depends on Mg(2+) as a cofactor. Mn(2+) serves as cofactor.

Its subcellular location is the cytoplasm. The enzyme catalyses (2R,3S)-3-isopropylmalate + NAD(+) = 4-methyl-2-oxopentanoate + CO2 + NADH. It functions in the pathway amino-acid biosynthesis; L-leucine biosynthesis; L-leucine from 3-methyl-2-oxobutanoate: step 3/4. Catalyzes the oxidation of 3-carboxy-2-hydroxy-4-methylpentanoate (3-isopropylmalate) to 3-carboxy-4-methyl-2-oxopentanoate. The product decarboxylates to 4-methyl-2 oxopentanoate. The sequence is that of 3-isopropylmalate dehydrogenase from Salmonella paratyphi A (strain ATCC 9150 / SARB42).